Reading from the N-terminus, the 514-residue chain is MEELQGYFKKARSLQQHFLYPLLLQEFIYTLAYDDGLKGSIFYEPIEFFGYDNKSSLVLIKRLITRMYQQNFLIYSVNDSNQNGLRGHINYFYSHFFYSHIVSEGFSVIVEIPFSLRLVSSPKEKEIPKSQNLRSIHSIFPFLEDKLSHLNNVSDILIPHPIHLEILVPILQYWIQDVPSLHLLRFFLHKYHNLNSFIQNNKTIYVFSKENKRLFWFLYNSYVSECEFLLVFLRKQSCYLRSTSSVAFLERSHFYGKMEHIIIVCCNNFQKTLWPFKDPFMHYVRYQGKAILASRGAHLLMKKWRYYLVNFWQYYFHFWSQPYRMHINPLLNYSFYFLGYLSSVLINPYAVKNKMLENSFLIDTVFKKFDTIIPIIPLIGSLSKAKFCTVSGHPISKPVWGDLSDFDIIDRFGRICRNLSHYHSGSSKKQSLYRIKYILRLSCARTLARKHKSTARALLQRLGSGLLEEFFTEEEQVLSFIFPKTTPFPLHGSHKERIWSLDIIRVNDLVNQII.

This sequence belongs to the intron maturase 2 family. MatK subfamily.

The protein resides in the plastid. Its subcellular location is the chloroplast. Its function is as follows. Usually encoded in the trnK tRNA gene intron. Probably assists in splicing its own and other chloroplast group II introns. The polypeptide is Maturase K (Erythronium grandiflorum (Yellow avalanche-lily)).